A 353-amino-acid polypeptide reads, in one-letter code: ATP-dependent kinase YFH7 (353 aa).

31–39 serves as a coordination point for ATP; that stretch reads GSPGSGKST.

This sequence belongs to the YFH7 family.

Functionally, ATP-dependent kinase that could be involved in endoplasmic reticulum membrane assembly. In Saccharomyces cerevisiae (strain Lalvin EC1118 / Prise de mousse) (Baker's yeast), this protein is ATP-dependent kinase YFH7 (YFH7).